Here is a 207-residue protein sequence, read N- to C-terminus: Cytochrome c biogenesis ATP-binding export protein CcmA (207 aa).

In terms of domain architecture, ABC transporter spans 2–204; it reads LEVKNLTAIR…NPKLRKIRLG (203 aa). Position 34-41 (34-41) interacts with ATP; sequence GRNGTGKT.

It belongs to the ABC transporter superfamily. CcmA exporter (TC 3.A.1.107) family. The complex is composed of two ATP-binding proteins (CcmA) and two transmembrane proteins (CcmB).

It is found in the cell inner membrane. It carries out the reaction heme b(in) + ATP + H2O = heme b(out) + ADP + phosphate + H(+). In terms of biological role, part of the ABC transporter complex CcmAB involved in the biogenesis of c-type cytochromes; once thought to export heme, this seems not to be the case, but its exact role is uncertain. Responsible for energy coupling to the transport system. The sequence is that of Cytochrome c biogenesis ATP-binding export protein CcmA from Vibrio cholerae serotype O1 (strain ATCC 39315 / El Tor Inaba N16961).